Consider the following 233-residue polypeptide: Cytidylate kinase (233 aa).

ATP is bound at residue 15 to 23; the sequence is GPSGAGKST. The segment covering 183-201 has biased composition (basic and acidic residues); the sequence is RRDEQDSGREHAPLRRADD. Residues 183 to 202 form a disordered region; it reads RRDEQDSGREHAPLRRADDA.

The protein belongs to the cytidylate kinase family. Type 1 subfamily.

It is found in the cytoplasm. The catalysed reaction is CMP + ATP = CDP + ADP. The enzyme catalyses dCMP + ATP = dCDP + ADP. This Geobacter sulfurreducens (strain ATCC 51573 / DSM 12127 / PCA) protein is Cytidylate kinase.